The sequence spans 251 residues: Flap endonuclease Xni (251 aa).

Asp104 contacts Mg(2+). In terms of domain architecture, 5'-3' exonuclease spans 160–249 (VLPRQLPDYW…IDGNLQQLRL (90 aa)). Leu171, Ala172, Pro180, Val182, and Ile185 together coordinate K(+). The interval 184-189 (GIGPKS) is interaction with DNA.

Belongs to the Xni family. Mg(2+) is required as a cofactor. K(+) serves as cofactor.

Has flap endonuclease activity. During DNA replication, flap endonucleases cleave the 5'-overhanging flap structure that is generated by displacement synthesis when DNA polymerase encounters the 5'-end of a downstream Okazaki fragment. The sequence is that of Flap endonuclease Xni from Salmonella newport (strain SL254).